The chain runs to 561 residues: Urocanate hydratase (561 aa).

NAD(+) is bound by residues 52-53 (GG), Gln130, 176-178 (GMG), Glu196, Arg201, 242-243 (NA), 263-267 (QTSAH), 273-274 (YL), and Tyr322. Cys410 is an active-site residue. Gly492 provides a ligand contact to NAD(+).

It belongs to the urocanase family. NAD(+) serves as cofactor.

The protein resides in the cytoplasm. It carries out the reaction 4-imidazolone-5-propanoate = trans-urocanate + H2O. It participates in amino-acid degradation; L-histidine degradation into L-glutamate; N-formimidoyl-L-glutamate from L-histidine: step 2/3. Functionally, catalyzes the conversion of urocanate to 4-imidazolone-5-propionate. The chain is Urocanate hydratase from Salmonella newport (strain SL254).